The sequence spans 447 residues: Glucose-6-phosphate isomerase (447 aa).

E288 serves as the catalytic Proton donor. Active-site residues include H309 and K423.

Belongs to the GPI family.

It is found in the cytoplasm. It catalyses the reaction alpha-D-glucose 6-phosphate = beta-D-fructose 6-phosphate. It functions in the pathway carbohydrate biosynthesis; gluconeogenesis. The protein operates within carbohydrate degradation; glycolysis; D-glyceraldehyde 3-phosphate and glycerone phosphate from D-glucose: step 2/4. Catalyzes the reversible isomerization of glucose-6-phosphate to fructose-6-phosphate. In Lactobacillus johnsonii (strain CNCM I-12250 / La1 / NCC 533), this protein is Glucose-6-phosphate isomerase.